The primary structure comprises 88 residues: Sec-independent protein translocase protein TatA (88 aa).

A helical transmembrane segment spans residues 1–21 (MNLGPTEILLILVIVVLLFGA). The segment covering 46 to 56 (SNDDQRYEEQQ) has biased composition (basic and acidic residues). The tract at residues 46-88 (SNDDQRYEEQQQQRQIAAQAQQQVVNPVEIPQPQPTDIQRPQQ) is disordered. The segment covering 57-68 (QQRQIAAQAQQQ) has biased composition (low complexity).

The protein belongs to the TatA/E family. In terms of assembly, the Tat system comprises two distinct complexes: a TatABC complex, containing multiple copies of TatA, TatB and TatC subunits, and a separate TatA complex, containing only TatA subunits. Substrates initially bind to the TatABC complex, which probably triggers association of the separate TatA complex to form the active translocon.

Its subcellular location is the cell membrane. Functionally, part of the twin-arginine translocation (Tat) system that transports large folded proteins containing a characteristic twin-arginine motif in their signal peptide across membranes. TatA could form the protein-conducting channel of the Tat system. The protein is Sec-independent protein translocase protein TatA of Corynebacterium diphtheriae (strain ATCC 700971 / NCTC 13129 / Biotype gravis).